Reading from the N-terminus, the 788-residue chain is Endonuclease MutS2 (788 aa).

335-342 (GPNTGGKT) contacts ATP. The disordered stretch occupies residues 688-708 (VKSASKTKKRSGGTSITKQSA). Over residues 699-708 (GGTSITKQSA) the composition is skewed to polar residues. Residues 713 to 788 (LDLRGVRVEE…GHGVTIIELK (76 aa)) form the Smr domain.

It belongs to the DNA mismatch repair MutS family. MutS2 subfamily. Homodimer. Binds to stalled ribosomes, contacting rRNA.

Endonuclease that is involved in the suppression of homologous recombination and thus may have a key role in the control of bacterial genetic diversity. In terms of biological role, acts as a ribosome collision sensor, splitting the ribosome into its 2 subunits. Detects stalled/collided 70S ribosomes which it binds and splits by an ATP-hydrolysis driven conformational change. Acts upstream of the ribosome quality control system (RQC), a ribosome-associated complex that mediates the extraction of incompletely synthesized nascent chains from stalled ribosomes and their subsequent degradation. Probably generates substrates for RQC. In Exiguobacterium sibiricum (strain DSM 17290 / CCUG 55495 / CIP 109462 / JCM 13490 / 255-15), this protein is Endonuclease MutS2.